A 117-amino-acid chain; its full sequence is Large ribosomal subunit protein uL18 (117 aa).

Belongs to the universal ribosomal protein uL18 family. In terms of assembly, part of the 50S ribosomal subunit; part of the 5S rRNA/L5/L18/L25 subcomplex. Contacts the 5S and 23S rRNAs.

This is one of the proteins that bind and probably mediate the attachment of the 5S RNA into the large ribosomal subunit, where it forms part of the central protuberance. The polypeptide is Large ribosomal subunit protein uL18 (Klebsiella pneumoniae subsp. pneumoniae (strain ATCC 700721 / MGH 78578)).